Here is a 527-residue protein sequence, read N- to C-terminus: T-complex protein 1 subunit beta (527 aa).

The residue at position 2 (S2) is an N-acetylserine.

Belongs to the TCP-1 chaperonin family. In terms of assembly, heterooligomeric complex of about 850 to 900 kDa that forms two stacked rings, 12 to 16 nm in diameter. Interacts with PLP2; this interaction leads to inhibition of CCT complex mediated actin folding.

Its subcellular location is the cytoplasm. In terms of biological role, molecular chaperone; assists the folding of proteins upon ATP hydrolysis. Known to play a role, in vitro, in the folding of actin and tubulin. In yeast may play a role in mitotic spindle formation. This chain is T-complex protein 1 subunit beta (CCT2), found in Saccharomyces cerevisiae (strain ATCC 204508 / S288c) (Baker's yeast).